The primary structure comprises 227 residues: MSIAAAPLTLALSKGRIFEETLPLLAEAGIGVVESPESSRKLILPTSDPGLRLIIVRASDVPTYVQYGAADFGIAGKDVLIEHAAGQAGRLYQPIDLNIAKCRLSVAVREDFDYAAAVHQGARLRVATKYVQSAREHFASKGVYVDLIKLYGSMELAPLVGLADAIVDLVSTGGTLRANGLREVETIMPISSRLIVNQASLKTRGASLQPLLDAFQRASQGQADSNS.

The protein belongs to the ATP phosphoribosyltransferase family. Short subfamily. Heteromultimer composed of HisG and HisZ subunits.

The protein resides in the cytoplasm. The catalysed reaction is 1-(5-phospho-beta-D-ribosyl)-ATP + diphosphate = 5-phospho-alpha-D-ribose 1-diphosphate + ATP. It functions in the pathway amino-acid biosynthesis; L-histidine biosynthesis; L-histidine from 5-phospho-alpha-D-ribose 1-diphosphate: step 1/9. Catalyzes the condensation of ATP and 5-phosphoribose 1-diphosphate to form N'-(5'-phosphoribosyl)-ATP (PR-ATP). Has a crucial role in the pathway because the rate of histidine biosynthesis seems to be controlled primarily by regulation of HisG enzymatic activity. This is ATP phosphoribosyltransferase from Bordetella avium (strain 197N).